The chain runs to 78 residues: Pigment-dispersing hormone peptides (78 aa).

The first 22 residues, 1 to 22, serve as a signal peptide directing secretion; the sequence is MRSAVIVTMLVVVALAALLTQG. A75 is subject to Alanine amide.

Belongs to the arthropod PDH family. Expressed in eyestalk tissue and cerebral ganglia.

The protein resides in the secreted. Functionally, the pigment-dispersing hormone causes the migration of the distal retinal pigment into the proximal end of the pigment chromatophore cells and thus decreases the amount of light entering the retinulas. May also function as a neurotransmitter and/or neuromodulator. The sequence is that of Pigment-dispersing hormone peptides from Carcinus maenas (Common shore crab).